The chain runs to 631 residues: MSTTTLTRREQRAKAQHFIDTLEGTAFPNSKRIYVTGSQHDIRVPMREIQLSPTLIGGSKDNPQFEENEAVPVYDTSGPYGDPEVAINVQQGLAKLRQPWIDARNDSEELDDRSSAYTRERLADDGLDDLRFTGLLTPKRAKAGKCVTQLHYARKGIITPEMEFIAIRENMGRERIRSEVLRHQHPGMNFGARLPENITPEFVRDEVAAGRAIIPANINHPESEPMIIGRNFLVKVNANIGNSAVTSSIEEEVEKLVWSTRWGADTVMDLSTGRYIHETREWILRNSPVPIGTVPIYQALEKVNGIAEDLTWEAFRDTLLEQAEQGVDYFTIHAGVLLRYVPMTAKRLTGIVSRGGSIMAKWCLSHHKENFLFEHFREICEICAAYDISLSLGDGLRPGSIQDANDEAQFSELHTLGELTKIAWEYDVQVMIEGPGHVPMHMIQRNMTEELESCHEAPFYTLGPLTTDIAPGYDHFTSGIGAAMIGWFGCAMLCYVTPKEHLGLPNKEDVKQGLITYKIAAHAADLAKGHPGAQIRDNAMSKARFEFRWEDQFNLALDPFTARAYHDETLPQESGKVAHFCSMCGPKFCSMKISQEVRDYAAAQAIEVGMADMSENFRAKGGEIYLKREEV.

Residues asparagine 239, methionine 268, tyrosine 297, histidine 333, 353–355, 394–397, and glutamate 433 each bind substrate; these read SRG and DGLR. Zn(2+) is bound at residue histidine 437. Residue tyrosine 460 coordinates substrate. Residue histidine 501 participates in Zn(2+) binding. Residues cysteine 581, cysteine 584, and cysteine 589 each contribute to the [4Fe-4S] cluster site.

Belongs to the ThiC family. Homodimer. The cofactor is [4Fe-4S] cluster.

It carries out the reaction 5-amino-1-(5-phospho-beta-D-ribosyl)imidazole + S-adenosyl-L-methionine = 4-amino-2-methyl-5-(phosphooxymethyl)pyrimidine + CO + 5'-deoxyadenosine + formate + L-methionine + 3 H(+). It participates in cofactor biosynthesis; thiamine diphosphate biosynthesis. Functionally, catalyzes the synthesis of the hydroxymethylpyrimidine phosphate (HMP-P) moiety of thiamine from aminoimidazole ribotide (AIR) in a radical S-adenosyl-L-methionine (SAM)-dependent reaction. The chain is Phosphomethylpyrimidine synthase from Salmonella paratyphi C (strain RKS4594).